A 205-amino-acid polypeptide reads, in one-letter code: Large ribosomal subunit protein uL13 (205 aa).

The protein belongs to the universal ribosomal protein uL13 family.

This chain is Large ribosomal subunit protein uL13 (RPL13A), found in Lupinus luteus (European yellow lupine).